The sequence spans 338 residues: tRNA N6-adenosine threonylcarbamoyltransferase (338 aa).

2 residues coordinate Fe cation: H111 and H115. Substrate-binding positions include 134 to 138 (LVSGG), D167, G180, and N272. D300 contacts Fe cation.

This sequence belongs to the KAE1 / TsaD family. Fe(2+) is required as a cofactor.

The protein localises to the cytoplasm. It catalyses the reaction L-threonylcarbamoyladenylate + adenosine(37) in tRNA = N(6)-L-threonylcarbamoyladenosine(37) in tRNA + AMP + H(+). Its function is as follows. Required for the formation of a threonylcarbamoyl group on adenosine at position 37 (t(6)A37) in tRNAs that read codons beginning with adenine. Is involved in the transfer of the threonylcarbamoyl moiety of threonylcarbamoyl-AMP (TC-AMP) to the N6 group of A37, together with TsaE and TsaB. TsaD likely plays a direct catalytic role in this reaction. This is tRNA N6-adenosine threonylcarbamoyltransferase from Shewanella baltica (strain OS223).